The primary structure comprises 431 residues: Aspartate--tRNA(Asp/Asn) ligase (431 aa).

Glu170 contacts L-aspartate. Residues 192–195 (QLYK) form an aspartate region. Arg214 is a binding site for L-aspartate. Residues 214-216 (RAE), 222-224 (RHL), and Glu354 each bind ATP. 2 residues coordinate Mg(2+): Glu354 and Ser357. Positions 357 and 361 each coordinate L-aspartate. Residue 402 to 405 (GLER) coordinates ATP.

It belongs to the class-II aminoacyl-tRNA synthetase family. Type 2 subfamily. In terms of assembly, homodimer. Mg(2+) is required as a cofactor.

It localises to the cytoplasm. The enzyme catalyses tRNA(Asx) + L-aspartate + ATP = L-aspartyl-tRNA(Asx) + AMP + diphosphate. Aspartyl-tRNA synthetase with relaxed tRNA specificity since it is able to aspartylate not only its cognate tRNA(Asp) but also tRNA(Asn). Reaction proceeds in two steps: L-aspartate is first activated by ATP to form Asp-AMP and then transferred to the acceptor end of tRNA(Asp/Asn). This is Aspartate--tRNA(Asp/Asn) ligase from Methanopyrus kandleri (strain AV19 / DSM 6324 / JCM 9639 / NBRC 100938).